The sequence spans 1355 residues: Transcription factor MAR1 (1355 aa).

Residues 23-52 (CTICRKRKVKCDKTRPHCNQCTKTGVAHLC) constitute a DNA-binding region (zn(2)-C6 fungal-type). Disordered regions lie at residues 586–614 (TTDN…KDTN), 918–942 (SVPS…LNQD), and 1221–1253 (PPIS…TSSL). A compositionally biased stretch (low complexity) spans 589–603 (NTRSGPPSNSNRNGS). Polar residues predominate over residues 604-614 (ETPSVSPKDTN). Low complexity predominate over residues 918–927 (SVPSSCNSSS). Over residues 1225–1238 (SAKNNMAWGTTPES) the composition is skewed to polar residues.

It is found in the nucleus. Its function is as follows. Transcription factor that contributes to plasma membrane sphingolipid incorporation and membrane permeability, decreasing fluconazole accumulation. Regulates 337 genes under fluconazole stress, including several related to lipid biosynthesis pathways such as RSB1, encoding a sphingoid long-chain base efflux transporter. Associates with the promoter of RSB1 in the region containing two 5'-CCCCTCC-3' motifs and increases its promoter occupancy upon fluconazole stress. This Candida glabrata (strain ATCC 2001 / BCRC 20586 / JCM 3761 / NBRC 0622 / NRRL Y-65 / CBS 138) (Yeast) protein is Transcription factor MAR1.